Reading from the N-terminus, the 385-residue chain is Putative ESX-1 scaffolding and assembly protein SaeC (385 aa).

The protein resides in the cytoplasm. Its function is as follows. May be involved in assembly of the ESX-1 / type VII specialized secretion system (T7SS), which exports several proteins including EsxA and EsxB. Involved in DNA conjugation in recipient (MKD8) strain. This is Putative ESX-1 scaffolding and assembly protein SaeC from Mycolicibacterium smegmatis (strain ATCC 700084 / mc(2)155) (Mycobacterium smegmatis).